The following is a 473-amino-acid chain: MSEDSDMEKAIKETSILEEYSINWTQKLGAGISGPVRVCVKKSTQERFALKILLDRPKARNEVRLHMMCATHPNIVQIIEVFANSVQFPHESSPRARLLIVMEMMEGGELFHRISQHRHFTEKQASQVTKQIALALQHCHLLNIAHRDLKPENLLFKDNSLDAPVKLCDFGFAKVDQGDLMTPQFTPYYVAPQVLEAQRRHQKEKSGIIPTSPTPYTYNKSCDLWSLGVIIYVMLCGYPPFYSKHHSRTIPKDMRKKIMTGSFEFPEEEWSQISEMAKDVVRKLLKVKPEERLTIEGVLDHPWLNSTEALDNVLPSAQLMMDKAVVAGIQQAHAEQLANMRIQDLKVSLKPLHSVNNPILRKRKLLGTKPKDGIYIHDHENGTEDSNVALEKLRDVIAQCILPQAGKGENEDEKLNEVMQEAWKYNRECKLLRDALQSFSWNGRGFTDKVDRLKLAEVVKQVIEEQTLPHEPQ.

A Protein kinase domain is found at 22–304; sequence INWTQKLGAG…IEGVLDHPWL (283 aa). Residues 28–36 and lysine 51 contribute to the ATP site; that span reads LGAGISGPV. The residue at position 115 (serine 115) is a Phosphoserine; by PKA. Aspartate 148 (proton acceptor) is an active-site residue. A Phosphothreonine; by MAPK11, MAPK14, MAPK4, MAPK6 and PKA modification is found at threonine 182. Residues serine 212 and serine 354 each carry the phosphoserine modification. A coiled-coil region spans residues 409–440; it reads ENEDEKLNEVMQEAWKYNRECKLLRDALQSFS.

This sequence belongs to the protein kinase superfamily. CAMK Ser/Thr protein kinase family. Interacts with SQSTM1. Interacts with ERK3/MAPK6 and ERK4/MAPK4 (via FRIEDE motif); the interaction is direct. Interacts with YWHAE; the interaction prevents phosphorylation of HSP27/HSPB1 leading to disrupt F-actin polymerization. In terms of processing, phosphorylated on Thr-182 ERK3/MAPK6 or ERK4/MAPK4; which is the regulatory phosphorylation site and is located on the T-loop/loop 12, leading to activation. Phosphorylation at Thr-182 by p38-alpha/MAPK14, p38-beta/MAPK11 is subject to debate. Phosphorylated at Ser-115 by PKA/PRKACA, leading to localization to the cytoplasm. Autophosphorylated. Expressed ubiquitously.

The protein resides in the cytoplasm. It is found in the nucleus. It carries out the reaction L-seryl-[protein] + ATP = O-phospho-L-seryl-[protein] + ADP + H(+). The enzyme catalyses L-threonyl-[protein] + ATP = O-phospho-L-threonyl-[protein] + ADP + H(+). Activated following phosphorylation at Thr-182 by p38-alpha/MAPK14, p38-beta/MAPK11, ERK2/MAPK1, ERK3/MAPK6, and ERK4/MAPK4. Activated by stress-related extracellular stimuli; such as H(2)O(2), arsenite, anisomycin TNF alpha and also PMA and the calcium ionophore A23187; but to a lesser extent. In vitro, activated by SQSTM1. Inhibited by diterpenoid alkaloid noroxoaconitine. In terms of biological role, tumor suppressor serine/threonine-protein kinase involved in mTORC1 signaling and post-transcriptional regulation. Phosphorylates FOXO3, ERK3/MAPK6, ERK4/MAPK4, HSP27/HSPB1, p53/TP53 and RHEB. Acts as a tumor suppressor by mediating Ras-induced senescence and phosphorylating p53/TP53. Involved in post-transcriptional regulation of MYC by mediating phosphorylation of FOXO3: phosphorylation of FOXO3 leads to promote nuclear localization of FOXO3, enabling expression of miR-34b and miR-34c, 2 post-transcriptional regulators of MYC that bind to the 3'UTR of MYC transcript and prevent MYC translation. Acts as a negative regulator of mTORC1 signaling by mediating phosphorylation and inhibition of RHEB. Part of the atypical MAPK signaling via its interaction with ERK3/MAPK6 or ERK4/MAPK4: the precise role of the complex formed with ERK3/MAPK6 or ERK4/MAPK4 is still unclear, but the complex follows a complex set of phosphorylation events: upon interaction with atypical MAPK (ERK3/MAPK6 or ERK4/MAPK4), ERK3/MAPK6 (or ERK4/MAPK4) is phosphorylated and then mediates phosphorylation and activation of MAPKAPK5, which in turn phosphorylates ERK3/MAPK6 (or ERK4/MAPK4). Mediates phosphorylation of HSP27/HSPB1 in response to PKA/PRKACA stimulation, inducing F-actin rearrangement. The sequence is that of MAP kinase-activated protein kinase 5 (Mapkapk5) from Mus musculus (Mouse).